We begin with the raw amino-acid sequence, 1322 residues long: Phosphoribosylformylglycinamidine synthase (1322 aa).

Residues 307–318 (GASTGSGGEIRD) and Ala-678 contribute to the ATP site. Mg(2+)-binding residues include Glu-718, Asn-722, and Asp-886. Positions 1069 to 1322 (MAILREQGVN…MFRNARVNLG (254 aa)) constitute a Glutamine amidotransferase type-1 domain. The active-site Nucleophile is the Cys-1162. Residues His-1287 and Glu-1289 contribute to the active site.

It in the N-terminal section; belongs to the FGAMS family. Monomer.

Its subcellular location is the cytoplasm. It carries out the reaction N(2)-formyl-N(1)-(5-phospho-beta-D-ribosyl)glycinamide + L-glutamine + ATP + H2O = 2-formamido-N(1)-(5-O-phospho-beta-D-ribosyl)acetamidine + L-glutamate + ADP + phosphate + H(+). It participates in purine metabolism; IMP biosynthesis via de novo pathway; 5-amino-1-(5-phospho-D-ribosyl)imidazole from N(2)-formyl-N(1)-(5-phospho-D-ribosyl)glycinamide: step 1/2. Its function is as follows. Phosphoribosylformylglycinamidine synthase involved in the purines biosynthetic pathway. Catalyzes the ATP-dependent conversion of formylglycinamide ribonucleotide (FGAR) and glutamine to yield formylglycinamidine ribonucleotide (FGAM) and glutamate. This chain is Phosphoribosylformylglycinamidine synthase, found in Photobacterium profundum (strain SS9).